We begin with the raw amino-acid sequence, 226 residues long: Putative methyltransferase RP459 (226 aa).

It belongs to the methyltransferase superfamily.

The chain is Putative methyltransferase RP459 from Rickettsia prowazekii (strain Madrid E).